A 434-amino-acid chain; its full sequence is Oxysterol-binding protein homolog 5 (434 aa).

Positions 18 to 371 are OSBP-related domain (ORD); sequence SSFNGDLSSL…KQVDYMNENT (354 aa). 24-29 contacts a 1,2-diacyl-sn-glycero-3-phospho-(1D-myo-inositol 4-phosphate); that stretch reads LSSLSA. Position 96 (Q96) interacts with 20-hydroxycholesterol. Q96 lines the 25-hydroxycholesterol pocket. 7beta-hydroxycholesterol-binding residues include Q96 and R100. Q96 contributes to the cholesterol binding site. Position 96 (Q96) interacts with ergosterol. Residues 109–112, 143–144, K335, E339, and R343 each bind a 1,2-diacyl-sn-glycero-3-phospho-(1D-myo-inositol 4-phosphate); these read KPLN and HH. S389 bears the Phosphoserine mark.

The protein belongs to the OSBP family.

It is found in the vacuole membrane. It localises to the bud neck. Functionally, lipid transport protein (LTP) involved in non-vesicular transfer of lipids between membranes. Functions in phosphoinositide-coupled directional transport of various lipids by carrying the lipid molecule in a hydrophobic pocket and transferring it between membranes through the cytosol. Involved in maintenance of intracellular sterol distribution and homeostasis. Plays a role in ergosterol synthesis. Binds and transports sterol. May be involved in ergosterol transport from the plasma membrane (PM) to the ER. The sequence is that of Oxysterol-binding protein homolog 5 from Saccharomyces cerevisiae (strain ATCC 204508 / S288c) (Baker's yeast).